The primary structure comprises 610 residues: Isocitrate dehydrogenase kinase/phosphatase (610 aa).

ATP is bound by residues 359-365 and Lys380; that span reads APGFKGT. Asp419 is a catalytic residue.

Belongs to the AceK family.

It localises to the cytoplasm. The catalysed reaction is L-seryl-[isocitrate dehydrogenase] + ATP = O-phospho-L-seryl-[isocitrate dehydrogenase] + ADP + H(+). In terms of biological role, bifunctional enzyme which can phosphorylate or dephosphorylate isocitrate dehydrogenase (IDH) on a specific serine residue. This is a regulatory mechanism which enables bacteria to bypass the Krebs cycle via the glyoxylate shunt in response to the source of carbon. When bacteria are grown on glucose, IDH is fully active and unphosphorylated, but when grown on acetate or ethanol, the activity of IDH declines drastically concomitant with its phosphorylation. This is Isocitrate dehydrogenase kinase/phosphatase from Rhodopseudomonas palustris (strain TIE-1).